We begin with the raw amino-acid sequence, 115 residues long: Type 3 secretion system chaperone YscG (115 aa).

Belongs to the YscG family. In terms of assembly, component of the heterodimeric YscE-YscG chaperone. The YscE-YscG chaperone forms a stable ternary complex with YscF/SctF.

The protein resides in the cytoplasm. Its function is as follows. Chaperone of the type III secretion system (T3SS), also called injectisome, which is used to inject bacterial effector proteins into eukaryotic host cells. Along with YscE, prevents premature polymerization of the YscF/SctF needle protein within the cytoplasm. Required for Yop secretion. The chain is Type 3 secretion system chaperone YscG from Yersinia enterocolitica.